The primary structure comprises 584 residues: Long-chain-fatty-acid--AMP ligase FadD26 (584 aa).

It belongs to the ATP-dependent AMP-binding enzyme family.

The enzyme catalyses holo-[(phenol)carboxyphthiodiolenone synthase] + a long-chain fatty acid + ATP = a long-chain fatty acyl-[(phenol)carboxyphthiodiolenone synthase] + AMP + diphosphate. The catalysed reaction is eicosanoate + holo-[(phenol)carboxyphthiodiolenone synthase] + ATP = icosanoyl-[(phenol)carboxyphthiodiolenone synthase] + AMP + diphosphate. It carries out the reaction holo-[(phenol)carboxyphthiodiolenone synthase] + docosanoate + ATP = docosanoyl-[(phenol)carboxyphthiodiolenone synthase] + AMP + diphosphate. The protein operates within lipid metabolism; fatty acid biosynthesis. Catalyzes the activation of long-chain fatty acids as acyl-adenylates (acyl-AMP), which are then transferred to the multifunctional polyketide synthase PpsA for further chain extension. Catalyzes the adenylation of the long-chain fatty acids eicosanoate (C20) or docosanoate (C22), and potentially the very-long-chain fatty acid lignocerate (C24). Involved in the biosynthesis of phthiocerol dimycocerosate (DIM A) and phthiodiolone dimycocerosate (DIM B). This chain is Long-chain-fatty-acid--AMP ligase FadD26, found in Mycobacterium marinum (strain ATCC BAA-535 / M).